We begin with the raw amino-acid sequence, 116 residues long: NADH-ubiquinone oxidoreductase chain 3 (116 aa).

3 helical membrane passes run 4 to 24 (LIIT…IAFW), 56 to 76 (FFLV…LLPL), and 88 to 108 (TLIL…YEWI).

This sequence belongs to the complex I subunit 3 family. Core subunit of respiratory chain NADH dehydrogenase (Complex I) which is composed of 45 different subunits. Interacts with TMEM186. Interacts with TMEM242.

Its subcellular location is the mitochondrion inner membrane. The enzyme catalyses a ubiquinone + NADH + 5 H(+)(in) = a ubiquinol + NAD(+) + 4 H(+)(out). Core subunit of the mitochondrial membrane respiratory chain NADH dehydrogenase (Complex I) which catalyzes electron transfer from NADH through the respiratory chain, using ubiquinone as an electron acceptor. Essential for the catalytic activity of complex I. The sequence is that of NADH-ubiquinone oxidoreductase chain 3 from Didelphis virginiana (North American opossum).